The following is a 187-amino-acid chain: Protein canopy-1 (187 aa).

Positions 1-24 (MSPWIKHICLVLVAAFMLVKTTES) are cleaved as a signal peptide. The Saposin B-type domain maps to 28-181 (EALYCSACMA…EVSDHCKSSV (154 aa)). Disulfide bonds link Cys32/Cys177, Cys35/Cys170, and Cys90/Cys143. Residues 184–187 (HSEL) carry the Prevents secretion from ER motif.

Belongs to the canopy family. In terms of assembly, homodimer. Interacts with fgfr1.

Its subcellular location is the endoplasmic reticulum. Involved in the maintenance of the midbrain-hindbrain boundary (MHB) organizer. Contributes to a positive-feedback loop of FGF signaling in the MHB, enabling the MHB to exert its role as an organizer for the tectal and cerebellar development. This Danio rerio (Zebrafish) protein is Protein canopy-1 (cnpy1).